The sequence spans 107 residues: Phosphoribosyl-ATP pyrophosphatase (107 aa).

This sequence belongs to the PRA-PH family.

It is found in the cytoplasm. The catalysed reaction is 1-(5-phospho-beta-D-ribosyl)-ATP + H2O = 1-(5-phospho-beta-D-ribosyl)-5'-AMP + diphosphate + H(+). It functions in the pathway amino-acid biosynthesis; L-histidine biosynthesis; L-histidine from 5-phospho-alpha-D-ribose 1-diphosphate: step 2/9. This chain is Phosphoribosyl-ATP pyrophosphatase (hisE), found in Agrobacterium fabrum (strain C58 / ATCC 33970) (Agrobacterium tumefaciens (strain C58)).